The sequence spans 285 residues: Probable endonuclease 4 (285 aa).

His69, His109, Glu145, Asp179, His182, His216, Asp229, His231, and Glu261 together coordinate Zn(2+).

This sequence belongs to the AP endonuclease 2 family. It depends on Zn(2+) as a cofactor.

The enzyme catalyses Endonucleolytic cleavage to 5'-phosphooligonucleotide end-products.. In terms of biological role, endonuclease IV plays a role in DNA repair. It cleaves phosphodiester bonds at apurinic or apyrimidinic (AP) sites, generating a 3'-hydroxyl group and a 5'-terminal sugar phosphate. The sequence is that of Probable endonuclease 4 from Salmonella agona (strain SL483).